The primary structure comprises 506 residues: Protoheme IX farnesyltransferase, mitochondrial (506 aa).

The transit peptide at 1-42 directs the protein to the mitochondrion; the sequence is MILRSSLGRLGVARESPLCLQCLNRSRPSFPAVNKLASISRL. A compositionally biased stretch (polar residues) spans 45-61; it reads TVAGQSPSSSVNKTYFS. The segment at 45-131 is disordered; it reads TVAGQSPSSS…AEPVIPPDAS (87 aa). Residues 73 to 88 show a composition bias toward low complexity; sequence PSLFTSLSPSNSPSQL. Residues 89 to 100 show a composition bias toward polar residues; that stretch reads NRGHSTPSTSPE. Transmembrane regions (helical) follow at residues 163–183, 199–221, 247–267, 269–289, 297–317, 337–357, 390–410, and 439–459; these read FLVL…SILA, LTFL…LNMI, AAVF…YFGT, PTVT…YTPL, TWIG…AAAG, LGGW…FNAL, VLMF…HGFL, and GLFW…LVTK.

Belongs to the UbiA prenyltransferase family.

The protein resides in the mitochondrion membrane. It carries out the reaction heme b + (2E,6E)-farnesyl diphosphate + H2O = Fe(II)-heme o + diphosphate. Functionally, converts protoheme IX and farnesyl diphosphate to heme O. In Emericella nidulans (strain FGSC A4 / ATCC 38163 / CBS 112.46 / NRRL 194 / M139) (Aspergillus nidulans), this protein is Protoheme IX farnesyltransferase, mitochondrial (cox10).